A 375-amino-acid chain; its full sequence is Serpentine receptor class alpha-39 (375 aa).

Transmembrane regions (helical) follow at residues 17–37 (LFAI…LFII), 51–71 (LVFL…LTAW), 99–119 (IRGT…GILL), 138–158 (LGTI…FILL), 183–203 (VYVM…VHLV), 236–256 (TPLL…VSVF), and 275–295 (LFIM…ELWL).

The protein belongs to the nematode receptor-like protein sra family.

The protein localises to the membrane. In Caenorhabditis elegans, this protein is Serpentine receptor class alpha-39 (sra-39).